Consider the following 312-residue polypeptide: Ribosomal RNA small subunit methyltransferase H (312 aa).

S-adenosyl-L-methionine contacts are provided by residues glycine 36–histidine 38, aspartate 55, phenylalanine 81, aspartate 103, and glutamine 110.

It belongs to the methyltransferase superfamily. RsmH family.

It localises to the cytoplasm. The catalysed reaction is cytidine(1402) in 16S rRNA + S-adenosyl-L-methionine = N(4)-methylcytidine(1402) in 16S rRNA + S-adenosyl-L-homocysteine + H(+). Functionally, specifically methylates the N4 position of cytidine in position 1402 (C1402) of 16S rRNA. This chain is Ribosomal RNA small subunit methyltransferase H, found in Marinomonas sp. (strain MWYL1).